A 317-amino-acid polypeptide reads, in one-letter code: MSAPETTAPLQPPAAPAASLPGSLAESLASSGITELLAQLDRELIGLKPVKARIRDIAALLLVDKLRAARGFSAGAPSLHMCFTGNPGTGKTTVAMRMAQILHQLGYVRRGHLVAVTRDDLVGQYIGHTAPKTKEILKKAMGGVLFIDEAYYLYRPENERDYGQEAIEILLQVMENNRDDLVVILAGYKDRMDRFFESNPGMSSRVAHHVDFPDYQLDELRQIADLMLSEMQYRFDDESRAVFADYLARRMTQPHFANARSVRNALDRARLRHASRLLDDAGTVVDDHTLTTITASDLLASRVFSKAAPDARTPAKE.

The segment at 1–21 (MSAPETTAPLQPPAAPAASLP) is disordered. 85–92 (GNPGTGKT) is an ATP binding site.

This sequence belongs to the CbxX/CfxQ family.

In terms of biological role, seems to be necessary for the expression of RuBisCO. The chain is Protein CbxX, chromosomal (cbxXC) from Cupriavidus necator (strain ATCC 17699 / DSM 428 / KCTC 22496 / NCIMB 10442 / H16 / Stanier 337) (Ralstonia eutropha).